We begin with the raw amino-acid sequence, 485 residues long: Cytolytic protein enterolobin (485 aa).

2 disulfide bridges follow: Cys34-Cys98 and Cys183-Cys189.

Belongs to the aerolysin family. In terms of assembly, oligomerizes as a hexamer. In terms of processing, the N-terminus is blocked.

In terms of biological role, cytolytic protein with insecticidal activity. Acts as a pro-inflammatory agent. In Enterolobium contortisiliquum (Pacara earpod tree), this protein is Cytolytic protein enterolobin.